We begin with the raw amino-acid sequence, 473 residues long: Methionine aminopeptidase 2 (473 aa).

The disordered stretch occupies residues 23–121 (LAEDSSNGTQ…KLVSIDQSYP (99 aa)). A compositionally biased stretch (polar residues) spans 41–53 (KATTAVGQDNGNN). Positions 73–83 (DDDDDDEDDDV) are enriched in acidic residues. Residues 84-93 (AAAAAAVGDA) are compositionally biased toward low complexity. The span at 97–113 (KKKKKKKSSNKKKKKKL) shows a compositional bias: basic residues. Histidine 224 provides a ligand contact to substrate. The a divalent metal cation site is built by aspartate 244, aspartate 255, and histidine 326. Histidine 334 contacts substrate. Glutamate 359 and glutamate 454 together coordinate a divalent metal cation.

It belongs to the peptidase M24A family. Methionine aminopeptidase eukaryotic type 2 subfamily. Requires Co(2+) as cofactor. Zn(2+) is required as a cofactor. The cofactor is Mn(2+). Fe(2+) serves as cofactor.

The protein localises to the cytoplasm. It catalyses the reaction Release of N-terminal amino acids, preferentially methionine, from peptides and arylamides.. Its function is as follows. Cotranslationally removes the N-terminal methionine from nascent proteins. The N-terminal methionine is often cleaved when the second residue in the primary sequence is small and uncharged (Met-Ala-, Cys, Gly, Pro, Ser, Thr, or Val). This chain is Methionine aminopeptidase 2, found in Lodderomyces elongisporus (strain ATCC 11503 / CBS 2605 / JCM 1781 / NBRC 1676 / NRRL YB-4239) (Yeast).